The primary structure comprises 193 residues: Capsid protein (193 aa).

Its subcellular location is the virion. This is Capsid protein from Apple chlorotic leaf spot virus (isolate apple) (ACLSV).